The sequence spans 123 residues: UPF0102 protein SPO0400 (123 aa).

It belongs to the UPF0102 family.

The sequence is that of UPF0102 protein SPO0400 from Ruegeria pomeroyi (strain ATCC 700808 / DSM 15171 / DSS-3) (Silicibacter pomeroyi).